The chain runs to 196 residues: Agamous-like MADS-box protein AGL70 (196 aa).

Residues 1–61 (MGRRKVEIKR…GKLYDSASGD (61 aa)) form the MADS-box domain. The Nuclear localization signal signature appears at 8 to 15 (IKRIENKS). A K-box domain is found at 80–170 (ALDLAEKIRN…ASQVGKKTFL (91 aa)).

Mostly expressed in roots, leaves and flowers, and, to a lower extent, in inflorescence, siliques, pollen and shoots.

Its subcellular location is the nucleus. Its function is as follows. Probable transcription factor involved in the negative regulation of flowering time, probably through the photoperiodic and vernalization pathways; more efficient in cv. Landsberg erecta than in cv. Columbia background. Prevents premature flowering. Involved in the modulation of vernalization impact on flowering according to genotype acclimation to altitude. In Arabidopsis thaliana (Mouse-ear cress), this protein is Agamous-like MADS-box protein AGL70.